The chain runs to 412 residues: MGDGAVKQGFLYLQQQQTFGKKWRRFGASLYGGSDCALARLELQEGPEKPRRCEAARKVIRLSDCLRVAEAGGEASSPRDTSAFFLETKERLYLLAAPAAERGDWVQAICLLAFPGQRKELSGPEGKQSRPCMEENELYSSAVTVGPHKEFAVTMRPTEASERCHLRGSYTLRAGESALELWGGPEPGTQLYDWPYRFLRRFGRDKVTFSFEAGRRCVSGEGNFEFETRQGNEIFLALEEAISAQKNAAPATPQPQPATIPASLPRPDSPYSRPHDSLPPPSPTTPVPAPRPRGQEGEYAVPFDAVARSLGKNFRGILAVPPQLLADPLYDSIEETLPPRPDHIYDEPEGVAALSLYDSPQEPRGEAWRRQATADRDPAGLQHVQPAGQDFSASGWQPGTEYDNVVLKKGPK.

One can recognise a PH domain in the interval 4–114 (GAVKQGFLYL…WVQAICLLAF (111 aa)). An IRS-type PTB domain is found at 147 to 252 (PHKEFAVTMR…SAQKNAAPAT (106 aa)). The tract at residues 246 to 296 (KNAAPATPQPQPATIPASLPRPDSPYSRPHDSLPPPSPTTPVPAPRPRGQE) is disordered. Tyr-271 is modified (phosphotyrosine). Residues 277–291 (SLPPPSPTTPVPAPR) show a composition bias toward pro residues. Phosphotyrosine is present on residues Tyr-299 and Tyr-345. Residues 359–412 (SPQEPRGEAWRRQATADRDPAGLQHVQPAGQDFSASGWQPGTEYDNVVLKKGPK) are disordered. Basic and acidic residues predominate over residues 361-378 (QEPRGEAWRRQATADRDP).

The protein belongs to the DOK family. Type A subfamily. Interacts with phosphorylated RASGAP and EGFR. Interacts with RET and NCK. Interacts (via PH domain) with TEK/TIE2 (tyrosine phosphorylated). As to quaternary structure, (Microbial infection) Interacts with Herpes simplex virus 1 (HHV-1) protein UL46; this interaction induces DOK2 phosphorylation and subsequent degradation. In terms of processing, on immunoreceptor stimulation, phosphorylated on C-terminal tyrosine residues. Phosphorylation on Tyr-345 is required for binding to the SH2 domain of NCK. Phosphorylation on both Tyr-271 and Tyr-299 is required for interaction with RASGAP. Phosphorylated on tyrosine residues by TEK/TIE2. Highly expressed in peripheral blood leukocytes, lymph nodes and spleen. Lower expression in thymus, bone marrow and fetal liver.

Its function is as follows. DOK proteins are enzymatically inert adaptor or scaffolding proteins. They provide a docking platform for the assembly of multimolecular signaling complexes. DOK2 may modulate the cellular proliferation induced by IL-4, as well as IL-2 and IL-3. May be involved in modulating Bcr-Abl signaling. Attenuates EGF-stimulated MAP kinase activation. In Homo sapiens (Human), this protein is Docking protein 2 (DOK2).